The primary structure comprises 309 residues: 4-hydroxy-3-methylbut-2-enyl diphosphate reductase (309 aa).

Cys-13 contacts [4Fe-4S] cluster. Positions 42 and 75 each coordinate (2E)-4-hydroxy-3-methylbut-2-enyl diphosphate. Residues His-42 and His-75 each contribute to the dimethylallyl diphosphate site. His-42 and His-75 together coordinate isopentenyl diphosphate. Cys-97 is a binding site for [4Fe-4S] cluster. His-125 serves as a coordination point for (2E)-4-hydroxy-3-methylbut-2-enyl diphosphate. His-125 contributes to the dimethylallyl diphosphate binding site. His-125 lines the isopentenyl diphosphate pocket. The active-site Proton donor is Glu-127. Residue Thr-165 participates in (2E)-4-hydroxy-3-methylbut-2-enyl diphosphate binding. Cys-195 serves as a coordination point for [4Fe-4S] cluster. 4 residues coordinate (2E)-4-hydroxy-3-methylbut-2-enyl diphosphate: Ser-223, Ser-224, Asn-225, and Ser-267. Ser-223, Ser-224, Asn-225, and Ser-267 together coordinate dimethylallyl diphosphate. Isopentenyl diphosphate is bound by residues Ser-223, Ser-224, Asn-225, and Ser-267.

This sequence belongs to the IspH family. It depends on [4Fe-4S] cluster as a cofactor.

The catalysed reaction is isopentenyl diphosphate + 2 oxidized [2Fe-2S]-[ferredoxin] + H2O = (2E)-4-hydroxy-3-methylbut-2-enyl diphosphate + 2 reduced [2Fe-2S]-[ferredoxin] + 2 H(+). It carries out the reaction dimethylallyl diphosphate + 2 oxidized [2Fe-2S]-[ferredoxin] + H2O = (2E)-4-hydroxy-3-methylbut-2-enyl diphosphate + 2 reduced [2Fe-2S]-[ferredoxin] + 2 H(+). It participates in isoprenoid biosynthesis; dimethylallyl diphosphate biosynthesis; dimethylallyl diphosphate from (2E)-4-hydroxy-3-methylbutenyl diphosphate: step 1/1. The protein operates within isoprenoid biosynthesis; isopentenyl diphosphate biosynthesis via DXP pathway; isopentenyl diphosphate from 1-deoxy-D-xylulose 5-phosphate: step 6/6. Catalyzes the conversion of 1-hydroxy-2-methyl-2-(E)-butenyl 4-diphosphate (HMBPP) into a mixture of isopentenyl diphosphate (IPP) and dimethylallyl diphosphate (DMAPP). Acts in the terminal step of the DOXP/MEP pathway for isoprenoid precursor biosynthesis. The sequence is that of 4-hydroxy-3-methylbut-2-enyl diphosphate reductase from Chlamydia caviae (strain ATCC VR-813 / DSM 19441 / 03DC25 / GPIC) (Chlamydophila caviae).